Reading from the N-terminus, the 172-residue chain is RNA silencing suppressor p19 (172 aa).

Residues 1–20 (MERAIQGNDAREQANSERWD) are compositionally biased toward basic and acidic residues. The tract at residues 1–38 (MERAIQGNDAREQANSERWDGGSGSSTSPFQLPDESPS) is disordered.

It belongs to the tombusvirus protein p19 family. Homodimer.

In terms of biological role, viral suppressor of RNA silencing which binds specifically to silencing RNAs (siRNAs). Acts as a molecular caliper to specifically select siRNAs based on the length of the duplex region of the RNA. In Tomato bushy stunt virus (strain type) (TBSV), this protein is RNA silencing suppressor p19.